The chain runs to 229 residues: Putative 3-methyladenine DNA glycosylase (229 aa).

The protein belongs to the DNA glycosylase MPG family.

The polypeptide is Putative 3-methyladenine DNA glycosylase (Enterococcus faecalis (strain ATCC 700802 / V583)).